The chain runs to 468 residues: Neuronal acetylcholine receptor subunit alpha-5 (468 aa).

The signal sequence occupies residues 1–22 (MATRGSGPRAPRLLLLVQLVAG). Over 23 to 254 (RCGLAGAAGG…VIKRLPLFYT (232 aa)) the chain is Extracellular. Asn155, Asn183, and Asn229 each carry an N-linked (GlcNAc...) asparagine glycan. A disulfide bond links Cys170 and Cys184. Cysteines 234 and 235 form a disulfide. 3 consecutive transmembrane segments (helical) span residues 255 to 275 (LFLIIPCIGLSFLTVLVFYLP), 282 to 302 (ICLCTSVLVSLTVFLLVIEEI), and 317 to 337 (LVFTMIFVTLSIMVTVFAINI). Over 338-429 (HHRSSSTHNA…WKFIAQVLDR (92 aa)) the chain is Cytoplasmic. The helical transmembrane segment at 430–451 (MFLWTFLFVSIVGSLGLFVPVI) threads the bilayer. The Extracellular portion of the chain corresponds to 452 to 468 (YKWANILIPVHIGNANK).

It belongs to the ligand-gated ion channel (TC 1.A.9) family. Acetylcholine receptor (TC 1.A.9.1) subfamily. Alpha-5/CHRNA5 sub-subfamily. Neuronal AChR that forms heteropentamers composed of two different type of subunits: alpha and non-alpha (beta). CHRNA5/alpha-5 subunit is only able to form functional nAChRs when co-assembled with another alpha subunit, can be combined to CHRNA4/alpha-4 or CHRNA3/alpha-3 and CHRNB4/beta-4 or CHRNB2/beta-2 to give rise to functional receptors. Interacts with LYPD6.

Its subcellular location is the synaptic cell membrane. It is found in the cell membrane. It carries out the reaction Ca(2+)(in) = Ca(2+)(out). The enzyme catalyses K(+)(in) = K(+)(out). The catalysed reaction is Na(+)(in) = Na(+)(out). With respect to regulation, activated by a myriad of ligands such as acetylcholine, cytisine, nicotine, choline and epibatidine. Functionally, component of neuronal acetylcholine receptors (nAChRs) that function as pentameric, ligand-gated cation channels with high calcium permeability among other activities. nAChRs are excitatory neurotrasnmitter receptors formed by a collection of nAChR subunits known to mediate synaptic transmission in the nervous system and the neuromuscular junction. Each nAchR subunit confers differential attributes to channel properties, including activation, deactivation and desensitization kinetics, pH sensitivity, cation permeability, and binding to allosteric modulators. Has an accessory rather than functional role and is only able to form functional nAChRs when co-assembled with another beta subunit. Participates in pentameric assemblies along with CHRNA3, CHRNA4, CHRNB2 and CHRNB4. Increases receptor sensitivity to acetylcholine and nicotine when associated with CHRNA4 and CHRNB2. Plays a role in nicotine addiction. In Pan troglodytes (Chimpanzee), this protein is Neuronal acetylcholine receptor subunit alpha-5 (CHRNA5).